Reading from the N-terminus, the 104-residue chain is Large ribosomal subunit protein bL21 (104 aa).

Belongs to the bacterial ribosomal protein bL21 family. As to quaternary structure, part of the 50S ribosomal subunit. Contacts protein L20.

In terms of biological role, this protein binds to 23S rRNA in the presence of protein L20. The protein is Large ribosomal subunit protein bL21 of Endomicrobium trichonymphae.